Consider the following 120-residue polypeptide: Large ribosomal subunit protein uL18 (120 aa).

It belongs to the universal ribosomal protein uL18 family. As to quaternary structure, part of the 50S ribosomal subunit; part of the 5S rRNA/L5/L18/L25 subcomplex. Contacts the 5S and 23S rRNAs.

Its function is as follows. This is one of the proteins that bind and probably mediate the attachment of the 5S RNA into the large ribosomal subunit, where it forms part of the central protuberance. The protein is Large ribosomal subunit protein uL18 of Xanthobacter autotrophicus (strain ATCC BAA-1158 / Py2).